The following is a 153-amino-acid chain: Nucleoside diphosphate kinase (153 aa).

Residues Lys13, Phe61, Arg89, Thr95, Arg106, and Asn116 each contribute to the ATP site. His119 functions as the Pros-phosphohistidine intermediate in the catalytic mechanism.

This sequence belongs to the NDK family. Mg(2+) serves as cofactor. As to expression, highest levels in the liver and kidney with lower levels in the heart, brain and breast muscle.

Its subcellular location is the cytoplasm. The protein resides in the cell membrane. It carries out the reaction a 2'-deoxyribonucleoside 5'-diphosphate + ATP = a 2'-deoxyribonucleoside 5'-triphosphate + ADP. It catalyses the reaction a ribonucleoside 5'-diphosphate + ATP = a ribonucleoside 5'-triphosphate + ADP. In terms of biological role, major role in the synthesis of nucleoside triphosphates other than ATP. The ATP gamma phosphate is transferred to the NDP beta phosphate via a ping-pong mechanism, using a phosphorylated active-site intermediate. The sequence is that of Nucleoside diphosphate kinase from Columba livia (Rock dove).